The following is a 353-amino-acid chain: Farnesyl pyrophosphate synthase (353 aa).

The isopentenyl diphosphate site is built by Lys-57, Arg-60, and Gln-96. Lys-57 carries the post-translational modification N6-(2-hydroxyisobutyryl)lysine; alternate. Lys-57 is subject to N6-acetyllysine; alternate. 2 residues coordinate Mg(2+): Asp-103 and Asp-107. Residue Arg-112 participates in dimethylallyl diphosphate binding. Residue Arg-113 participates in isopentenyl diphosphate binding. Dimethylallyl diphosphate contacts are provided by Lys-200, Thr-201, Gln-240, Lys-257, and Lys-266.

This sequence belongs to the FPP/GGPP synthase family. As to quaternary structure, homodimer. Interacts with RSAD2. Requires Mg(2+) as cofactor. In terms of tissue distribution, testis, liver, kidney, brain and adrenal gland.

The protein localises to the cytoplasm. It carries out the reaction isopentenyl diphosphate + dimethylallyl diphosphate = (2E)-geranyl diphosphate + diphosphate. The enzyme catalyses isopentenyl diphosphate + (2E)-geranyl diphosphate = (2E,6E)-farnesyl diphosphate + diphosphate. It participates in isoprenoid biosynthesis; farnesyl diphosphate biosynthesis; farnesyl diphosphate from geranyl diphosphate and isopentenyl diphosphate: step 1/1. Its pathway is isoprenoid biosynthesis; geranyl diphosphate biosynthesis; geranyl diphosphate from dimethylallyl diphosphate and isopentenyl diphosphate: step 1/1. Inactivated by interferon-induced RSAD2. This inactivation may result of disruption of lipid rafts at the plasma membrane, and thus have an antiviral effect since many enveloped viruses need lipid rafts to bud efficiently out of the cell. In terms of biological role, key enzyme in isoprenoid biosynthesis which catalyzes the formation of farnesyl diphosphate (FPP), a precursor for several classes of essential metabolites including sterols, dolichols, carotenoids, and ubiquinones. FPP also serves as substrate for protein farnesylation and geranylgeranylation. Catalyzes the sequential condensation of isopentenyl pyrophosphate with the allylic pyrophosphates, dimethylallyl pyrophosphate, and then with the resultant geranylpyrophosphate to the ultimate product farnesyl pyrophosphate. This is Farnesyl pyrophosphate synthase (Fdps) from Rattus norvegicus (Rat).